The following is a 527-amino-acid chain: MTRQAAEVAKRRTFAIISHPDAGKTTITEKLLLMGKAIAVAGTVKSRKSDRHATSDWMEMEKQRGISITTSVMQFPYREHMINLLDTPGHEDFSEDTYRTLTAVDSALMVLDGGKGVEPRTIALMDVCRLRDTPIVSFINKLDRDIRDPIELLDEIEAVLKIKAAPITWPIGCYRDFKGVYHLADDYIIVYTAGHGHERTETKIIEKLDSDEARAHLGDEYERFLEQLELVQGACHEFNQQEFLDGQLTPVFFGTALGNFGVDHVLDAVVDWAPRPLPRVANERTVEPVEEKFSGFIFKIQANMDPKHRDRIAFMRICSGKYEKGMKMRHVRTGKDVRIGDALTFFSSEREQLEEAYAGDIIGLHNHGTIQIGDTFSEGETLGFTGIPHFAPELFRRVRLRDPLKSKQLRQGLQQLAEEGATQVFFPERSNDIILGAVGVLQFDVVASRLKEEYKVECSYEPITVYSARWIECSDKKKLEEFSNKAVENLALDGGGHLTYLAPTRVNLALMEERWPDVKFRATREHH.

The region spanning 9–277 (AKRRTFAIIS…AVVDWAPRPL (269 aa)) is the tr-type G domain. Residues 18-25 (SHPDAGKT), 86-90 (DTPGH), and 140-143 (NKLD) each bind GTP.

It belongs to the TRAFAC class translation factor GTPase superfamily. Classic translation factor GTPase family. PrfC subfamily.

It is found in the cytoplasm. In terms of biological role, increases the formation of ribosomal termination complexes and stimulates activities of RF-1 and RF-2. It binds guanine nucleotides and has strong preference for UGA stop codons. It may interact directly with the ribosome. The stimulation of RF-1 and RF-2 is significantly reduced by GTP and GDP, but not by GMP. This is Peptide chain release factor 3 from Pseudomonas fluorescens (strain Pf0-1).